Consider the following 315-residue polypeptide: Ribosomal RNA small subunit methyltransferase H (315 aa).

Residues 37-39 (GGH), aspartate 57, phenylalanine 83, aspartate 105, and glutamine 112 contribute to the S-adenosyl-L-methionine site.

Belongs to the methyltransferase superfamily. RsmH family.

Its subcellular location is the cytoplasm. It catalyses the reaction cytidine(1402) in 16S rRNA + S-adenosyl-L-methionine = N(4)-methylcytidine(1402) in 16S rRNA + S-adenosyl-L-homocysteine + H(+). Specifically methylates the N4 position of cytidine in position 1402 (C1402) of 16S rRNA. In Pseudomonas entomophila (strain L48), this protein is Ribosomal RNA small subunit methyltransferase H.